We begin with the raw amino-acid sequence, 446 residues long: Transcriptional adapter 2-alpha (446 aa).

The ZZ-type zinc-finger motif lies at 12–69 (FDKPPCRGCSSYLTEPYVKCAECGPPPFLLCLQCFTRGFEYKKHQSDHTYEIMTSDFP). Zn(2+) is bound by residues Cys-17, Cys-20, Cys-31, Cys-34, Cys-42, Cys-45, His-55, and His-59. Residues 70 to 122 (VLDPNWTAQEEMALLEAVMDCGFGNWQDVANQMCTKSKEECEKHYMKHFINNP) form the SANT domain. The disordered stretch occupies residues 345–375 (DIDSGPTPAAPIPSNSGRRSAPPLNLTGLPG). One can recognise an SWIRM domain in the interval 359 to 446 (NSGRRSAPPL…LIREGYITKA (88 aa)). Residues 429-438 (KTRKIYDFLI) mediate DNA binding.

The protein localises to the nucleus. The protein resides in the chromosome. Functionally, component of some complex with histone acetyltransferase activity. Required for the function of some acidic activation domains, which activate transcription from a distant site. Binds double-stranded DNA. Binds dinucleosomes, probably at the linker region between neighboring nucleosomes. Plays a role in chromatin remodeling. The sequence is that of Transcriptional adapter 2-alpha (TADA2A) from Gallus gallus (Chicken).